Reading from the N-terminus, the 1101-residue chain is Leucine-rich repeat receptor-like serine/threonine-protein kinase At1g17230 (1101 aa).

The first 23 residues, 1 to 23 (MRGRICFLAIVILCSFSFILVRS), serve as a signal peptide directing secretion. The Extracellular portion of the chain corresponds to 24–734 (LNEEGRVLLE…WLINGSQRQK (711 aa)). N-linked (GlcNAc...) asparagine glycans are attached at residues asparagine 39, asparagine 57, asparagine 78, and asparagine 97. 26 LRR repeats span residues 66 to 90 (LRTV…ICKL), 91 to 115 (HGLR…SLCR), 117 to 137 (LEVL…QLTM), 138 to 162 (IITL…IGNL), 163 to 186 (SSLQ…MAKL), 188 to 210 (QLRI…ISGC), 211 to 234 (ESLK…LEKL), 235 to 258 (QNLT…VGNI), 260 to 282 (RLEV…IGKL), 283 to 306 (TKMK…IGNL), 308 to 329 (DAAE…EFGH), 330 to 354 (ILNL…LGEL), 355 to 379 (TLLE…QFLP), 381 to 402 (LVDL…IGFY), 403 to 426 (SNFS…FCRF), 427 to 450 (QTLI…LKTC), 451 to 474 (KSLT…LFNL), 476 to 498 (NLTA…LGKL), 499 to 522 (KNLE…IGNL), 524 to 546 (KIVG…LGSC), 548 to 569 (TIQR…ELGQ), 570 to 593 (LVYL…SFGD), 595 to 618 (TRLM…LGKL), 619 to 643 (TSLQ…LGNL), 644 to 667 (QMLE…IGNL), and 669 to 692 (SLLI…VFQR). Residues asparagine 161 and asparagine 174 are each glycosylated (N-linked (GlcNAc...) asparagine). N-linked (GlcNAc...) asparagine glycans are attached at residues asparagine 236 and asparagine 257. N-linked (GlcNAc...) asparagine glycosylation occurs at asparagine 368. N-linked (GlcNAc...) asparagine glycosylation occurs at asparagine 404. Residues asparagine 476, asparagine 490, asparagine 510, asparagine 521, and asparagine 529 are each glycosylated (N-linked (GlcNAc...) asparagine). Asparagine 626 and asparagine 631 each carry an N-linked (GlcNAc...) asparagine glycan. Residues asparagine 674 and asparagine 728 are each glycosylated (N-linked (GlcNAc...) asparagine). The chain crosses the membrane as a helical span at residues 735–755 (ILTITCIVIGSVFLITFLGLC). At 756–1101 (WTIKRREPAF…LEEANSSKEI (346 aa)) the chain is on the cytoplasmic side. 2 positions are modified to phosphothreonine: threonine 788 and threonine 796. Residues 799 to 1081 (FSEDVVLGRG…ITEARGSSSL (283 aa)) form the Protein kinase domain. Residues 805-813 (LGRGACGTV) and lysine 827 each bind ATP. 2 positions are modified to phosphotyrosine: tyrosine 874 and tyrosine 913. Aspartate 926 (proton acceptor) is an active-site residue. Position 960 is a phosphoserine (serine 960). Residues tyrosine 968 and tyrosine 975 each carry the phosphotyrosine modification. The residue at position 976 (threonine 976) is a Phosphothreonine. A disordered region spans residues 1076-1101 (RGSSSLSSSSITSETPLEEANSSKEI). Over residues 1078–1088 (SSSLSSSSITS) the composition is skewed to low complexity.

It belongs to the protein kinase superfamily. Ser/Thr protein kinase family.

It localises to the cell membrane. It carries out the reaction L-seryl-[protein] + ATP = O-phospho-L-seryl-[protein] + ADP + H(+). The enzyme catalyses L-threonyl-[protein] + ATP = O-phospho-L-threonyl-[protein] + ADP + H(+). This chain is Leucine-rich repeat receptor-like serine/threonine-protein kinase At1g17230, found in Arabidopsis thaliana (Mouse-ear cress).